The sequence spans 579 residues: MFSLRSLVDYLRSQHELIDIHVPVDPHLEIAEIHRRVVEREGPALLFHQVKGSPFPVLTNLFGTRRRVDLLFPDLSSDLFEQIIHLLSSPPSFSSLWKHRSLFKRGISALGMRKRHLRPSPFLYQDAPNLSQLPMLTSWPEDGGPFLTLPLVYTQSPENGVPNLGMYRMQRFDKETLGLHFQIQKGGGAHFFEAEQKKQNLPVTVFLSGNPFLILSAIAPLPENVPELLFCSFLQNKKLSFVEKHPQSGHPLLCDSEFILTGEAVAGERRPEGPFGDHFGYYSLTHDFPIFKCNCLYHKKDAIYPATVVGKPFQEDFFLGNKLQELLSPLFPLIMPGVQDLKSYGEAGFHALAAAIVKERYWKEALRSALRILGEGQLSLTKFLWITDQSVDLENFPSLLECVLERMNFDRDLLILSETANDTLDYTGSGFNKGSKGIFLGVGAPIRSLPRRYRGPSLPGISQIGVFCRGCLVLETSLQQLDIPALLKEPHLADWPLVILVEDLSSALSSTKEFIWRTFTRSSPATDLHIPVSQITNHKVSYTPPMILNALMKPPYPKEVEADEATQNLVSSRWHSYFP.

This sequence belongs to the UbiD family.

This is an uncharacterized protein from Chlamydia trachomatis serovar D (strain ATCC VR-885 / DSM 19411 / UW-3/Cx).